Here is a 71-residue protein sequence, read N- to C-terminus: MSLSNEEMISNIRQKLNIVNQALLNPEKFKSTPHQDISEIYEFVMSKDSFSPSEVTAIADHLGQLRQDMED.

This sequence belongs to the UPF0435 family.

This Staphylococcus epidermidis (strain ATCC 12228 / FDA PCI 1200) protein is UPF0435 protein SE_1565.